The sequence spans 134 residues: Secreted RxLR effector protein 1 (134 aa).

Residues 1–22 (MFCRSPLVAVILLVLATHIVLA) form the signal peptide. The tract at residues 32–60 (SETVPSDSSQTTRKSTRRTTSVDNKRRLR) is disordered. Residues 37–52 (SDSSQTTRKSTRRTTS) are compositionally biased toward low complexity. The short motif at 57–79 (RRLRQQIMGKDGPVVNDVHAEER) is the RxLR-dEER element.

It belongs to the RxLR effector family.

It localises to the secreted. It is found in the host nucleus. Its function is as follows. Effector that acts as a broad suppressor of cell death to interrupt plant immunity. Inhibits cell death induced by cell death-inducing proteins, including the PAMP elicitor INF1 from P.infestans. This chain is Secreted RxLR effector protein 1, found in Plasmopara viticola (Downy mildew of grapevine).